A 271-amino-acid polypeptide reads, in one-letter code: MTVVSAFLVPGTPLPQLKPEVPSWGQLAAATERAGKALAASRPDVVLVYSTQWLAVLDQQWLTRPRSEGVHVDENWYEFGDLAYDIRADTALAEACVTSSPLHGVHARGVNYDGFPIDTGTITACTLMGIGTDAFPLVVGSNNLYHSGEITEKLAALAVDCAKDQNKRVAVVGVGGLSGSLFREEIDPREDRIANEEDDKWNRRVLKLIEAGDVSALREAMPVYAKEARVDMGFKHLHWILGALKGKFSGANVLGYGPSYGSGAAVIEFRL.

This sequence belongs to the LigB/MhpB extradiol dioxygenase family. In terms of assembly, the APD complex is a heterotetramer of 2 alpha (CnbCa) and 2 beta (CnbCb) subunits.

The protein operates within xenobiotic degradation; nitrobenzene degradation. It participates in xenobiotic degradation; 4-chloronitrobenzene degradation. Its function is as follows. Component of the 2-aminophenol 1,6-dioxygenase (APD) complex that catalyzes the ring fission of 2-aminophenol to produce 2-aminomuconic semialdehyde. CnbCa may have a role in the stability of the complex. The complex is also active on other substrates such as 2-amino-5-chlorophenol (68% activity), protocatechuate (33% activity) and catechol (5% activity). Both 2-aminophenol and 2-amino-5-cholorophenol are likely native substrates for this dioxygenase which is involved in the reductive degradation pathway of both nitrobenzene (NB) and 4-chloronitrobenzene (4-CNB), allowing C.testosteroni strain CNB-1 to grow on these compounds as sole source of carbon, nitrogen, and energy. The sequence is that of 2-aminophenol 1,6-dioxygenase subunit alpha from Comamonas testosteroni (Pseudomonas testosteroni).